Here is a 773-residue protein sequence, read N- to C-terminus: Mitochondrial inner membrane m-AAA protease component yta12 (773 aa).

Residues Phe-83–Asn-119 form a disordered region. Residues Ser-87–Ala-101 show a composition bias toward low complexity. The next 2 membrane-spanning stretches (helical) occupy residues Val-126–Leu-146 and Val-239–Leu-259. ATP-binding residues include Val-298, Ala-299, Thr-340, Gly-341, Lys-342, Thr-343, Leu-344, and His-479. His-561 lines the Zn(2+) pocket. Glu-562 is a catalytic residue. The Zn(2+) site is built by His-565 and Asp-638. Positions Glu-752–Ala-773 are disordered. A compositionally biased stretch (pro residues) spans Asn-761–Ala-773.

This sequence in the N-terminal section; belongs to the AAA ATPase family. It in the C-terminal section; belongs to the peptidase M41 family. In terms of assembly, component of the m-AAA protease complex. Requires Zn(2+) as cofactor.

It is found in the mitochondrion membrane. The enzyme catalyses ATP + H2O = ADP + phosphate + H(+). Catalytic component of the m-AAA protease, a protease that plays a key role in proteostasis of inner mitochondrial membrane proteins. Possesses both ATPase and protease activities: the ATPase activity is required to unfold substrates, threading them into the internal proteolytic cavity for hydrolysis into small peptide fragments. The complex is necessary for the assembly of mitochondrial respiratory chain and ATPase complexes. The m-AAA protease carries out protein quality control in the inner membrane of the mitochondria by mediating degradation of mistranslated or misfolded polypeptides. It also mediates protein maturation of the mitochondrial ribosomal subunit mrpl32/bL32m by catalyzing the cleavage of the presequence of mrpl32/bL32m prior to assembly into the mitochondrial ribosome. Also acts as a membrane protein dislocase: required to dislocate moderately hydrophobic transmembrane segments from the membrane. In Schizosaccharomyces pombe (strain 972 / ATCC 24843) (Fission yeast), this protein is Mitochondrial inner membrane m-AAA protease component yta12 (yta12).